The chain runs to 160 residues: Cyanate hydratase (160 aa).

Active-site residues include Arg100, Glu103, and Ser126.

Belongs to the cyanase family.

It catalyses the reaction cyanate + hydrogencarbonate + 3 H(+) = NH4(+) + 2 CO2. In terms of biological role, catalyzes the reaction of cyanate with bicarbonate to produce ammonia and carbon dioxide. The chain is Cyanate hydratase from Aspergillus niger (strain ATCC MYA-4892 / CBS 513.88 / FGSC A1513).